Here is a 354-residue protein sequence, read N- to C-terminus: Holliday junction branch migration complex subunit RuvB (354 aa).

The segment at 1–183 (MTGDNLVSAY…FGFVAHLDFY (183 aa)) is large ATPase domain (RuvB-L). ATP is bound by residues Arg23, Gly64, Lys67, Thr68, Ser69, 130 to 132 (EDF), Arg173, Tyr183, and Arg220. Residue Thr68 coordinates Mg(2+). The tract at residues 184–254 (SPADLETLLN…TAQAALTVYD (71 aa)) is small ATPAse domain (RuvB-S). Residues 257–354 (ALGLDRLDRA…DLFSVEPDQP (98 aa)) are head domain (RuvB-H). DNA-binding residues include Arg312 and Arg317.

The protein belongs to the RuvB family. Homohexamer. Forms an RuvA(8)-RuvB(12)-Holliday junction (HJ) complex. HJ DNA is sandwiched between 2 RuvA tetramers; dsDNA enters through RuvA and exits via RuvB. An RuvB hexamer assembles on each DNA strand where it exits the tetramer. Each RuvB hexamer is contacted by two RuvA subunits (via domain III) on 2 adjacent RuvB subunits; this complex drives branch migration. In the full resolvosome a probable DNA-RuvA(4)-RuvB(12)-RuvC(2) complex forms which resolves the HJ.

It is found in the cytoplasm. The catalysed reaction is ATP + H2O = ADP + phosphate + H(+). Its function is as follows. The RuvA-RuvB-RuvC complex processes Holliday junction (HJ) DNA during genetic recombination and DNA repair, while the RuvA-RuvB complex plays an important role in the rescue of blocked DNA replication forks via replication fork reversal (RFR). RuvA specifically binds to HJ cruciform DNA, conferring on it an open structure. The RuvB hexamer acts as an ATP-dependent pump, pulling dsDNA into and through the RuvAB complex. RuvB forms 2 homohexamers on either side of HJ DNA bound by 1 or 2 RuvA tetramers; 4 subunits per hexamer contact DNA at a time. Coordinated motions by a converter formed by DNA-disengaged RuvB subunits stimulates ATP hydrolysis and nucleotide exchange. Immobilization of the converter enables RuvB to convert the ATP-contained energy into a lever motion, pulling 2 nucleotides of DNA out of the RuvA tetramer per ATP hydrolyzed, thus driving DNA branch migration. The RuvB motors rotate together with the DNA substrate, which together with the progressing nucleotide cycle form the mechanistic basis for DNA recombination by continuous HJ branch migration. Branch migration allows RuvC to scan DNA until it finds its consensus sequence, where it cleaves and resolves cruciform DNA. In Salinispora tropica (strain ATCC BAA-916 / DSM 44818 / JCM 13857 / NBRC 105044 / CNB-440), this protein is Holliday junction branch migration complex subunit RuvB.